The following is a 300-amino-acid chain: UDP-3-O-acyl-N-acetylglucosamine deacetylase (300 aa).

Zn(2+) contacts are provided by His78, His237, and Asp241. The Proton donor role is filled by His264.

Belongs to the LpxC family. The cofactor is Zn(2+).

It catalyses the reaction a UDP-3-O-[(3R)-3-hydroxyacyl]-N-acetyl-alpha-D-glucosamine + H2O = a UDP-3-O-[(3R)-3-hydroxyacyl]-alpha-D-glucosamine + acetate. The protein operates within glycolipid biosynthesis; lipid IV(A) biosynthesis; lipid IV(A) from (3R)-3-hydroxytetradecanoyl-[acyl-carrier-protein] and UDP-N-acetyl-alpha-D-glucosamine: step 2/6. Functionally, catalyzes the hydrolysis of UDP-3-O-myristoyl-N-acetylglucosamine to form UDP-3-O-myristoylglucosamine and acetate, the committed step in lipid A biosynthesis. The polypeptide is UDP-3-O-acyl-N-acetylglucosamine deacetylase (Acinetobacter baumannii (strain SDF)).